The following is an 83-amino-acid chain: Hainantoxin-III 7 (83 aa).

The N-terminal stretch at 1 to 21 (MKASMFLALAGLVLLFVVGYA) is a signal peptide. Positions 22-48 (SESEEKEFPRELLSKVFAVDDFKGEER) are excised as a propeptide. Disulfide bonds link Cys50–Cys65, Cys57–Cys70, and Cys64–Cys77. Position 81 is a leucine amide (Leu81).

The protein belongs to the neurotoxin 10 (Hwtx-1) family. 15 (Hntx-3) subfamily. Monomer. In terms of tissue distribution, expressed by the venom gland.

The protein localises to the secreted. In terms of biological role, selective antagonist of neuronal tetrodotoxin (TTX)-sensitive voltage-gated sodium channels (IC(50)=1270 nM on Nav1.1/SCN1A, 270 nM on Nav1.2/SCN2A, 491 nM on Nav1.3/SCN3A and 232 nM on Nav1.7/SCN9A). This toxin suppress Nav1.7 current amplitude without significantly altering the activation, inactivation, and repriming kinetics. Short extreme depolarizations partially activate the toxin-bound channel, indicating voltage-dependent inhibition of this toxin. This toxin increases the deactivation of the Nav1.7 current after extreme depolarizations. The toxin-Nav1.7 complex is gradually dissociated upon prolonged strong depolarizations in a voltage-dependent manner, and the unbound toxin rebinds to Nav1.7 after a long repolarization. Moreover, analysis of chimeric channels showed that the DIIS3-S4 linker is critical for toxin binding to Nav1.7. These data are consistent with this toxin interacting with Nav1.7 site 4 and trapping the domain II voltage sensor in the closed state. This is Hainantoxin-III 7 from Cyriopagopus hainanus (Chinese bird spider).